The primary structure comprises 287 residues: uncharacterized protein (287 aa).

This sequence belongs to the A.longa ORF167/ORF288 family.

It is found in the plastid. This is an uncharacterized protein from Euglena longa (Euglenophycean alga).